Here is a 106-residue protein sequence, read N- to C-terminus: UPF0145 protein Tpet_0165 (106 aa).

Belongs to the UPF0145 family.

The sequence is that of UPF0145 protein Tpet_0165 from Thermotoga petrophila (strain ATCC BAA-488 / DSM 13995 / JCM 10881 / RKU-1).